The following is a 50-amino-acid chain: Cytochrome c oxidase subunit 4 (50 aa).

Topologically, residues alanine 2 to isoleucine 17 are cytoplasmic. Residues arginine 18–asparagine 49 traverse the membrane as a helical segment. A topological domain (periplasmic) is located at residue serine 50.

It is found in the cell inner membrane. It carries out the reaction 4 Fe(II)-[cytochrome c] + O2 + 8 H(+)(in) = 4 Fe(III)-[cytochrome c] + 2 H2O + 4 H(+)(out). Functionally, not required for enzymatic activity or proton pumping of the cytochrome c oxidase complex. The protein is Cytochrome c oxidase subunit 4 (ctaH) of Paracoccus denitrificans.